The sequence spans 473 residues: Biotin-dependent acetyl-/propionyl-coenzyme A carboxylase beta6 subunit (473 aa).

Residues 1-224 (MTIMAPEAVG…QGHFDRSKAE (224 aa)) enclose the CoA carboxyltransferase N-terminal domain. The 249-residue stretch at 225 to 473 (AGDTDIHALL…RRGRHKNIPL (249 aa)) folds into the CoA carboxyltransferase C-terminal domain.

The protein belongs to the AccD/PCCB family. The biotin-dependent acyl-CoA carboxylase complex is composed of AccA3, which contains the biotin carboxylase (BC) and biotin carboxyl carrier protein (BCCP) domains, and AccD6, which contains the carboxyl transferase (CT) domain.

The enzyme catalyses N(6)-carboxybiotinyl-L-lysyl-[protein] + acetyl-CoA = N(6)-biotinyl-L-lysyl-[protein] + malonyl-CoA. It catalyses the reaction N(6)-carboxybiotinyl-L-lysyl-[protein] + propanoyl-CoA = methylmalonyl-CoA + N(6)-biotinyl-L-lysyl-[protein]. The protein operates within lipid metabolism; fatty acid biosynthesis. Its pathway is lipid metabolism; mycolic acid biosynthesis. In terms of biological role, component of a biotin-dependent acyl-CoA carboxylase complex. This subunit transfers the CO2 from carboxybiotin to the CoA ester substrate. When associated with the alpha3 subunit AccA3, is involved in the carboxylation of acetyl-CoA and propionyl-CoA. This chain is Biotin-dependent acetyl-/propionyl-coenzyme A carboxylase beta6 subunit (accD6), found in Mycobacterium bovis (strain ATCC BAA-935 / AF2122/97).